The primary structure comprises 60 residues: UPF0434 protein KPK_3615 (60 aa).

It belongs to the UPF0434 family.

The polypeptide is UPF0434 protein KPK_3615 (Klebsiella pneumoniae (strain 342)).